Here is a 392-residue protein sequence, read N- to C-terminus: Pyruvate synthase subunit PorA (392 aa).

As to quaternary structure, heterotetramer of one alpha, one beta, one delta and one gamma chain.

The enzyme catalyses 2 oxidized [2Fe-2S]-[ferredoxin] + pyruvate + CoA = 2 reduced [2Fe-2S]-[ferredoxin] + acetyl-CoA + CO2 + H(+). In Thermotoga maritima (strain ATCC 43589 / DSM 3109 / JCM 10099 / NBRC 100826 / MSB8), this protein is Pyruvate synthase subunit PorA (porA).